Reading from the N-terminus, the 138-residue chain is Large ribosomal subunit protein uL16 (138 aa).

Over residues 1-13 (MLQPKRRKYRKEQ) the composition is skewed to basic residues. A disordered region spans residues 1–24 (MLQPKRRKYRKEQKGRNTGKATRG).

The protein belongs to the universal ribosomal protein uL16 family. Part of the 50S ribosomal subunit.

Binds 23S rRNA and is also seen to make contacts with the A and possibly P site tRNAs. This is Large ribosomal subunit protein uL16 from Burkholderia lata (strain ATCC 17760 / DSM 23089 / LMG 22485 / NCIMB 9086 / R18194 / 383).